Consider the following 233-residue polypeptide: Glucosamine-6-phosphate deaminase (233 aa).

The active-site Proton acceptor; for enolization step is the D62. N128 acts as the For ring-opening step in catalysis. H130 functions as the Proton acceptor; for ring-opening step in the catalytic mechanism. E135 serves as the catalytic For ring-opening step.

This sequence belongs to the glucosamine/galactosamine-6-phosphate isomerase family. NagB subfamily.

It catalyses the reaction alpha-D-glucosamine 6-phosphate + H2O = beta-D-fructose 6-phosphate + NH4(+). It functions in the pathway amino-sugar metabolism; N-acetylneuraminate degradation; D-fructose 6-phosphate from N-acetylneuraminate: step 5/5. Functionally, catalyzes the reversible isomerization-deamination of glucosamine 6-phosphate (GlcN6P) to form fructose 6-phosphate (Fru6P) and ammonium ion. In Streptococcus agalactiae serotype Ia (strain ATCC 27591 / A909 / CDC SS700), this protein is Glucosamine-6-phosphate deaminase.